A 4687-amino-acid polypeptide reads, in one-letter code: Plectin (4687 aa).

The interval 1–1473 (MVAGMLMPLD…SELTTLTSQY (1473 aa)) is globular 1. Arginine 21 carries the phosphoserine modification. At valine 26 the chain carries Phosphotyrosine. The disordered stretch occupies residues 111–158 (RRRSPHVQTMQGPLGCPPKRGPLPAEDPAREERQVYRRKEREEGAPET). Positions 137–154 (DPAREERQVYRRKEREEG) are enriched in basic and acidic residues. Residues 181–406 (DERDRVQKKT…YVSSLYDAMP (226 aa)) are actin-binding. 2 consecutive Calponin-homology (CH) domains span residues 185-288 (RVQK…LHFK) and 301-406 (MTAK…DAMP). One copy of the Spectrin 1 repeat lies at 648–722 (LQSTQRRPEL…ERARNDESQL (75 aa)). At serine 723 the chain carries Phosphoserine. Spectrin repeat units lie at residues 743-827 (KLLN…REDH) and 840-933 (LQTQ…AIVQ). Threonine 818 is modified (phosphothreonine). Residues 944–1001 (RGHVPLLAVCDYKQVEVTVHKGDQCQLVGPAQPFHWKVLSSSGSEAAVPSVCFLVPPP) form the SH3 domain. Phosphoserine is present on serine 1050. One copy of the Spectrin 4 repeat lies at 1318–1418 (RERVTQLLER…QKFAKQYINA (101 aa)). Serine 1438 carries the post-translational modification Phosphoserine. Coiled coils occupy residues 1472-1692 (QYIK…ERWL) and 1724-2760 (SFAE…TSQA). A central fibrous rod domain region spans residues 1474–2758 (IKFISETLRR…LAHSEEIATS (1285 aa)). The segment at 1623–1647 (EEAEAQKRQAQEEAERLRRQVQDES) is disordered. Serine 1724 is modified (phosphoserine). Lysine 1728 carries the post-translational modification N6-acetyllysine. Disordered stretches follow at residues 1741 to 1764 (VTVT…ERAR), 1796 to 1846 (SLAQ…GTAQ), 2096 to 2139 (EDTM…AEEE), 2164 to 2188 (LRER…KRLQ), and 2218 to 2307 (RLRS…DAEM). 3 stretches are compositionally biased toward basic and acidic residues: residues 1801–1839 (DAEK…KQRQ), 2096–2111 (EDTM…EAAR), and 2119–2131 (EEQR…ERVQ). Over residues 2173–2182 (ARQLQLAQEA) the composition is skewed to low complexity. Over residues 2218-2261 (RLRSEAEAARRAAEEAEEAREQAEREAAQSRKQVEEAERLKQSA) the composition is skewed to basic and acidic residues. Residues 2262-2275 (EEQAQAQAQAQAAA) are compositionally biased toward low complexity. The segment covering 2276–2291 (EKLRKEAEQEAARRAQ) has biased composition (basic and acidic residues). Serine 2634 carries the post-translational modification Phosphoserine. Lysine 2639 is subject to N6-acetyllysine. The segment at 2671–2710 (QEEQQRQQQQMEQEKQELVASMEEARRRQREAEEGVRRKQ) is disordered. Residues 2682 to 2710 (EQEKQELVASMEEARRRQREAEEGVRRKQ) are compositionally biased toward basic and acidic residues. The interval 2759-4687 (QAAATKALPN…SLGGPESAVA (1929 aa)) is globular 2. Serine 2777 carries the phosphoserine modification. Tyrosine 2784 carries the post-translational modification Phosphotyrosine. Plectin repeat units lie at residues 2791–2828 (QKVP…REDV), 2829–2866 (RHYL…PGTA), 2867–2904 (LILL…PELH), 2905–2942 (HKLL…RDHG), 2943–2980 (IRLL…EEMN), and 2984–3018 (ADPS…PETG). Serine 2805 is subject to Phosphoserine. Threonine 2889 carries the phosphothreonine modification. Tyrosine 3036 carries the post-translational modification Phosphotyrosine. Residues lysine 3056 and lysine 3094 each carry the N6-acetyllysine modification. 6 Plectin repeats span residues 3119-3156 (ALVP…ADEV), 3157-3194 (RQAL…PEVA), 3195-3232 (VALL…PEMH), 3233-3270 (EKLL…REQG), 3271-3308 (LRLL…KETN), and 3311-3346 (LTSP…QLTG). Tyrosine 3365 carries the post-translational modification Phosphotyrosine. The residue at position 3423 (lysine 3423) is an N6-acetyllysine. Plectin repeat units lie at residues 3488–3525 (RTLL…ASTA), 3526–3563 (TLLL…PELH), 3564–3601 (EKLL…RDHA), 3602–3639 (IRLL…EEMN), and 3643–3677 (ADPS…PETG). Serine 3583 is subject to Phosphoserine. Phosphothreonine is present on threonine 3788. A Phosphotyrosine modification is found at tyrosine 3793. 5 Plectin repeats span residues 3823-3860 (WRYL…AEVA), 3861-3898 (RLLL…PELH), 3899-3936 (DRLL…AEEA), 3937-3974 (LRLL…KDTH), and 3978-4011 (SEPS…DNSG). Threonine 4033 is modified (phosphothreonine). A Phosphoserine modification is found at serine 4057. 6 Plectin repeats span residues 4066–4103 (QKFL…PGTA), 4104–4141 (FELL…PEFK), 4142–4179 (DKLL…KDHG), 4180–4217 (IRLL…EEMN), 4221–4255 (TDPS…PQTG), and 4268–4308 (RKTS…HQTY). Residues 4253-4303 (QTGLCLLPLKEKKRERKTSSKSSVRKRRVVIVDPETGKEMSVYEAYRKGLI) form a binding to intermediate filaments region. A phosphoserine mark is found at serine 4385, serine 4387, serine 4388, serine 4389, serine 4392, serine 4393, serine 4394, and serine 4395. At tyrosine 4396 the chain carries Phosphotyrosine. A phosphoserine mark is found at serine 4399 and serine 4409. Plectin repeat units lie at residues 4411–4448 (SDPT…NITG), 4449–4486 (QRLL…KIMV), 4487–4524 (DRIN…YEAG), 4525–4562 (QRFL…ARTA), and 4563–4600 (QKLR…EGTG). At threonine 4414 the chain carries Phosphothreonine. Threonine 4542 carries the post-translational modification Phosphothreonine; by CDK1. Serine 4610 and serine 4616 each carry phosphoserine. Positions 4614 to 4674 (YYSPYSVSGS…SGYGRRYASG (61 aa)) are enriched in low complexity. The segment at 4614 to 4687 (YYSPYSVSGS…SLGGPESAVA (74 aa)) is disordered. Tyrosine 4618 bears the Phosphotyrosine mark. 3 positions are modified to phosphoserine: serine 4619, serine 4621, and serine 4625. Residue threonine 4626 is modified to Phosphothreonine. A 4 X 4 AA tandem repeats of G-S-R-X region spans residues 4628 to 4643 (GSRTGSRTGSRAGSRR). Serine 4629 is subject to Phosphoserine. An omega-N-methylarginine mark is found at arginine 4630 and arginine 4643. A phosphoserine mark is found at serine 4645 and serine 4678.

It belongs to the plakin or cytolinker family. As to quaternary structure, homodimer or homotetramer. Interacts (via actin-binding domain) with SYNE3. Interacts (via calponin-homology (CH) 1 domain) with VIM (via rod region). Interacts (via N-terminus) with DST isoform 2 (via N-terminus). Interacts with FER. Interacts with TOR1A. Interacts with ANK3. Identified in complexes that contain VIM, EZR, AHNAK, BFSP1, BFSP2, ANK2, PLEC, PRX and spectrin. In terms of processing, phosphorylated by CDK1; regulates dissociation from intermediate filaments during mitosis. Isoform 2 is phosphorylated on Ser-21 and Tyr-26. In terms of tissue distribution, widely expressed with highest expression in skeletal muscle and lowest in thymus.

The protein localises to the cytoplasm. The protein resides in the cytoskeleton. It localises to the cell junction. Its subcellular location is the hemidesmosome. It is found in the cell projection. The protein localises to the podosome. Interlinks intermediate filaments with microtubules and microfilaments and anchors intermediate filaments to desmosomes or hemidesmosomes. May be involved not only in the cross-linking and stabilization of cytoskeletal intermediate filaments network, but also in the regulation of their dynamics. This chain is Plectin (Plec), found in Rattus norvegicus (Rat).